A 326-amino-acid polypeptide reads, in one-letter code: Beta-ketoacyl-[acyl-carrier-protein] synthase III (326 aa).

Active-site residues include C111 and H252. The ACP-binding stretch occupies residues 253 to 257 (QANIR). Residue N282 is part of the active site.

The protein belongs to the thiolase-like superfamily. FabH family. Homodimer.

It localises to the plastid. The protein resides in the chloroplast. The catalysed reaction is malonyl-[ACP] + acetyl-CoA + H(+) = 3-oxobutanoyl-[ACP] + CO2 + CoA. It participates in lipid metabolism; fatty acid biosynthesis. Catalyzes the condensation reaction of fatty acid synthesis by the addition to an acyl acceptor of two carbons from malonyl-ACP. Catalyzes the first condensation reaction which initiates fatty acid synthesis and may therefore play a role in governing the total rate of fatty acid production. Possesses both acetoacetyl-ACP synthase and acetyl transacylase activities. Its substrate specificity determines the biosynthesis of branched-chain and/or straight-chain of fatty acids. The sequence is that of Beta-ketoacyl-[acyl-carrier-protein] synthase III from Porphyra purpurea (Red seaweed).